Here is a 471-residue protein sequence, read N- to C-terminus: Ribulose bisphosphate carboxylase large chain (471 aa).

The substrate site is built by Asn119 and Thr169. Lys171 (proton acceptor) is an active-site residue. A substrate-binding site is contributed by Lys173. Mg(2+) contacts are provided by Lys197, Asp199, and Glu200. Lys197 carries the N6-carboxylysine modification. His290 (proton acceptor) is an active-site residue. Residues Arg291, His323, and Ser375 each coordinate substrate.

The protein belongs to the RuBisCO large chain family. Type I subfamily. In terms of assembly, heterohexadecamer of 8 large chains and 8 small chains; disulfide-linked. The disulfide link is formed within the large subunit homodimers. Mg(2+) serves as cofactor. The disulfide bond which can form in the large chain dimeric partners within the hexadecamer appears to be associated with oxidative stress and protein turnover.

It localises to the carboxysome. The enzyme catalyses 2 (2R)-3-phosphoglycerate + 2 H(+) = D-ribulose 1,5-bisphosphate + CO2 + H2O. It catalyses the reaction D-ribulose 1,5-bisphosphate + O2 = 2-phosphoglycolate + (2R)-3-phosphoglycerate + 2 H(+). Functionally, ruBisCO catalyzes two reactions: the carboxylation of D-ribulose 1,5-bisphosphate, the primary event in carbon dioxide fixation, as well as the oxidative fragmentation of the pentose substrate in the photorespiration process. Both reactions occur simultaneously and in competition at the same active site. The polypeptide is Ribulose bisphosphate carboxylase large chain (Microcystis aeruginosa (strain NIES-843 / IAM M-2473)).